Reading from the N-terminus, the 938-residue chain is Isoleucine--tRNA ligase (938 aa).

The 'HIGH' region signature appears at 58 to 68 (PYANGNIHIGH). Glu562 lines the L-isoleucyl-5'-AMP pocket. The short motif at 603–607 (KMSKS) is the 'KMSKS' region element. Lys606 lines the ATP pocket. Zn(2+) contacts are provided by Cys901, Cys904, Cys921, and Cys924.

It belongs to the class-I aminoacyl-tRNA synthetase family. IleS type 1 subfamily. Monomer. Zn(2+) is required as a cofactor.

The protein resides in the cytoplasm. It catalyses the reaction tRNA(Ile) + L-isoleucine + ATP = L-isoleucyl-tRNA(Ile) + AMP + diphosphate. Catalyzes the attachment of isoleucine to tRNA(Ile). As IleRS can inadvertently accommodate and process structurally similar amino acids such as valine, to avoid such errors it has two additional distinct tRNA(Ile)-dependent editing activities. One activity is designated as 'pretransfer' editing and involves the hydrolysis of activated Val-AMP. The other activity is designated 'posttransfer' editing and involves deacylation of mischarged Val-tRNA(Ile). The polypeptide is Isoleucine--tRNA ligase (Actinobacillus pleuropneumoniae serotype 7 (strain AP76)).